A 190-amino-acid polypeptide reads, in one-letter code: Large ribosomal subunit protein bL9 (190 aa).

This sequence belongs to the bacterial ribosomal protein bL9 family.

Its function is as follows. Binds to the 23S rRNA. The polypeptide is Large ribosomal subunit protein bL9 (Methylobacterium radiotolerans (strain ATCC 27329 / DSM 1819 / JCM 2831 / NBRC 15690 / NCIMB 10815 / 0-1)).